We begin with the raw amino-acid sequence, 387 residues long: Beta-citrylglutamate synthase B (387 aa).

An ATP-grasp domain is found at 119–304 (FQELAGHGVP…VAGIIADYAA (186 aa)). ATP is bound by residues Lys158, 193 to 203 (QKYIKESHGRD), and Arg219. The Mg(2+) site is built by Asp264, Glu277, and Asn279. Mn(2+) contacts are provided by Asp264, Glu277, and Asn279. The segment at 325-361 (ASETSEPELGPPASAAVDNMSASSSSVDSDPESTTER) is disordered. A compositionally biased stretch (low complexity) spans 337–352 (ASAAVDNMSASSSSVD).

Belongs to the RimK family. It depends on Mg(2+) as a cofactor. Mn(2+) is required as a cofactor. Strongly expressed in brain and testis. Expressed in eyes, thymus, lung, kidney, skeletal muscle, spleen, skin and heart. Expressed in neurons of the neocortex, the gray matter and Purkinje cells.

It is found in the cytoplasm. It carries out the reaction citrate + L-glutamate + ATP = beta-citrylglutamate + ADP + phosphate + H(+). The enzyme catalyses N-acetyl-L-aspartate + L-glutamate + ATP = N-acetyl-L-aspartyl-L-glutamate + ADP + phosphate + H(+). In terms of biological role, catalyzes the synthesis of beta-citryl-L-glutamate and N-acetyl-L-aspartyl-L-glutamate. Beta-citryl-L-glutamate is synthesized more efficiently than N-acetyl-L-aspartyl-L-glutamate. The sequence is that of Beta-citrylglutamate synthase B (Rimklb) from Mus musculus (Mouse).